We begin with the raw amino-acid sequence, 122 residues long: Large ribosomal subunit protein uL24 (122 aa).

The protein belongs to the universal ribosomal protein uL24 family. Part of the 50S ribosomal subunit.

Functionally, one of two assembly initiator proteins, it binds directly to the 5'-end of the 23S rRNA, where it nucleates assembly of the 50S subunit. Located at the polypeptide exit tunnel on the outside of the subunit. This chain is Large ribosomal subunit protein uL24, found in Pyrobaculum arsenaticum (strain DSM 13514 / JCM 11321 / PZ6).